The chain runs to 443 residues: Trigger factor (443 aa).

Residues 169–254 (GDIAFLDFSG…LNSIKEVQLP (86 aa)) form the PPIase FKBP-type domain.

The protein belongs to the FKBP-type PPIase family. Tig subfamily.

It localises to the cytoplasm. The catalysed reaction is [protein]-peptidylproline (omega=180) = [protein]-peptidylproline (omega=0). Involved in protein export. Acts as a chaperone by maintaining the newly synthesized protein in an open conformation. Functions as a peptidyl-prolyl cis-trans isomerase. In Mycoplasmoides gallisepticum (strain R(low / passage 15 / clone 2)) (Mycoplasma gallisepticum), this protein is Trigger factor.